The following is a 284-amino-acid chain: Bifunctional protein FolD (284 aa).

Residues 166–168 (GAS) and Ile-232 each bind NADP(+).

It belongs to the tetrahydrofolate dehydrogenase/cyclohydrolase family. Homodimer.

It carries out the reaction (6R)-5,10-methylene-5,6,7,8-tetrahydrofolate + NADP(+) = (6R)-5,10-methenyltetrahydrofolate + NADPH. It catalyses the reaction (6R)-5,10-methenyltetrahydrofolate + H2O = (6R)-10-formyltetrahydrofolate + H(+). The protein operates within one-carbon metabolism; tetrahydrofolate interconversion. Its function is as follows. Catalyzes the oxidation of 5,10-methylenetetrahydrofolate to 5,10-methenyltetrahydrofolate and then the hydrolysis of 5,10-methenyltetrahydrofolate to 10-formyltetrahydrofolate. The chain is Bifunctional protein FolD from Shewanella sediminis (strain HAW-EB3).